Reading from the N-terminus, the 362-residue chain is DLA class I histocompatibility antigen, A9/A9 alpha chain (362 aa).

An N-terminal signal peptide occupies residues 1–24 (MEVVMPRALLVLLSAALALTPTRA). The alpha-1 stretch occupies residues 25–114 (GSHSLRYFYT…LRGYYNQSEA (90 aa)). The Extracellular portion of the chain corresponds to 25–306 (GSHSLRYFYT…RRWEPSPLST (282 aa)). The N-linked (GlcNAc...) asparagine glycan is linked to asparagine 110. An alpha-2 region spans residues 115 to 207 (GSHTRQTMYG…EMGKETLLRA (93 aa)). 2 cysteine pairs are disulfide-bonded: cysteine 125–cysteine 189 and cysteine 228–cysteine 284. Positions 208 to 299 (DPPSTRVTHH…GLPEPITRRW (92 aa)) are alpha-3. In terms of domain architecture, Ig-like C1-type spans 210-296 (PSTRVTHHPV…QHEGLPEPIT (87 aa)). Residues 300–306 (EPSPLST) form a connecting peptide region. The helical transmembrane segment at 307–329 (IVIVSIAALVLLVVAGVIGAVIW) threads the bilayer. At 330-362 (RKQRSGGKGPGYSHAARDDSAQGSDVSLTAPRV) the chain is on the cytoplasmic side. The disordered stretch occupies residues 333-362 (RSGGKGPGYSHAARDDSAQGSDVSLTAPRV).

The protein belongs to the MHC class I family. Heterodimer of an alpha chain and a beta chain (beta-2-microglobulin).

The protein resides in the membrane. Functionally, involved in the presentation of foreign antigens to the immune system. The protein is DLA class I histocompatibility antigen, A9/A9 alpha chain of Canis lupus familiaris (Dog).